A 130-amino-acid polypeptide reads, in one-letter code: MARVKRAVNAHKKRRVILERAAGYRGQRSRLYRKAKEQVTHSLVYAYRDRRAKKGEFRRLWIQRINAAARANGLTYNRLIQGLSLAGVQVDRRILAELAVHEPATFASLVQTAKTALPANTSAPKVAANA.

It belongs to the bacterial ribosomal protein bL20 family.

Its function is as follows. Binds directly to 23S ribosomal RNA and is necessary for the in vitro assembly process of the 50S ribosomal subunit. It is not involved in the protein synthesizing functions of that subunit. The polypeptide is Large ribosomal subunit protein bL20 (Clavibacter sepedonicus (Clavibacter michiganensis subsp. sepedonicus)).